We begin with the raw amino-acid sequence, 414 residues long: Cytosolic-abundant heat soluble protein 89226 (414 aa).

2 stretches are compositionally biased toward basic and acidic residues: residues 27–45 (IGEDRGKEDPGMNFQDKRP) and 69–84 (AGQRLREHLSESERLR). The interval 27–155 (IGEDRGKEDP…SNPGMNNGMT (129 aa)) is disordered. Low complexity-rich tracts occupy residues 86-101 (SRSSTSSKSSSFVEPS) and 120-134 (SSNRQNSSSNVSSSD). Residues 142–155 (ASRNSNPGMNNGMT) show a composition bias toward polar residues. 2 CAHS motif regions span residues 305 to 323 (YRNAVEADAELIRQTLERQ) and 342 to 360 (QQQEIRLEAEYAMRALEQE). Residues 341–376 (RQQQEIRLEAEYAMRALEQERVNARAALDQAMASTN) are a coiled coil. Polar residues predominate over residues 388 to 405 (THSQGRVTTTSESRTSQA). Residues 388–414 (THSQGRVTTTSESRTSQARGPATAAVI) form a disordered region.

It belongs to the Cytosolic-abundant heat soluble protein (CAHS) family.

It is found in the cytoplasm. CAHS proteins are cytosolic heat soluble proteins that seem to contribute to the anhydrobiosis in tardigrades, but their specific mechanisms are yet to be identified. It is possible that protection during anhydrobiosis might occur via the stabilization of vitrifying small molecules such as sugars, but not via the direct glass transition of CAHS proteins themselves. This chain is Cytosolic-abundant heat soluble protein 89226, found in Hypsibius exemplaris (Freshwater tardigrade).